The chain runs to 445 residues: GTPase Der (445 aa).

EngA-type G domains are found at residues 3–167 and 180–353; these read PVIA…YADQ and IKIA…AAAM. Residues 9–16, 56–60, 119–122, 186–193, 233–237, and 298–301 each bind GTP; these read GRPNVGKS, DTGGF, NKAE, DTAGL, and NKWD. A KH-like domain is found at 354–438; the sequence is AKLPTPKLTR…PLRIEFRSST (85 aa).

It belongs to the TRAFAC class TrmE-Era-EngA-EngB-Septin-like GTPase superfamily. EngA (Der) GTPase family. In terms of assembly, associates with the 50S ribosomal subunit.

In terms of biological role, GTPase that plays an essential role in the late steps of ribosome biogenesis. This is GTPase Der from Burkholderia multivorans (strain ATCC 17616 / 249).